Reading from the N-terminus, the 108-residue chain is Evasin P1156 (108 aa).

Positions 1 to 28 (MEVKTYAFLQIAVFIFLGMQIFASLTDA) are cleaved as a signal peptide. 3 disulfide bridges follow: cysteine 41-cysteine 63, cysteine 45-cysteine 65, and cysteine 56-cysteine 76. Asparagine 44 carries N-linked (GlcNAc...) asparagine glycosylation. A disordered region spans residues 89 to 108 (NPSDSEIEAAKPKRSDTLSH). The span at 96–108 (EAAKPKRSDTLSH) shows a compositional bias: basic and acidic residues.

It localises to the secreted. Functionally, salivary chemokine-binding protein which has chemokine-neutralizing activity and binds to host chemokines CXCL1, CXCL2, CXCL3, CXCL5, CXCL6 and CXCL8. This chain is Evasin P1156, found in Ixodes ricinus (Common tick).